A 59-amino-acid polypeptide reads, in one-letter code: Large ribosomal subunit protein uL30 (59 aa).

The protein belongs to the universal ribosomal protein uL30 family. Part of the 50S ribosomal subunit.

The sequence is that of Large ribosomal subunit protein uL30 from Alkaliphilus metalliredigens (strain QYMF).